The primary structure comprises 203 residues: Endo-type membrane-bound lytic murein transglycosylase A (203 aa).

Positions 1–15 (MKLRWFAFLVVLLAG) are cleaved as a signal peptide. The N-palmitoyl cysteine moiety is linked to residue cysteine 16. Cysteine 16 carries the S-diacylglycerol cysteine lipid modification.

Belongs to the transglycosylase Slt family.

The protein localises to the cell outer membrane. The enzyme catalyses Endolytic cleavage of the (1-&gt;4)-beta-glycosidic linkage between N-acetylmuramic acid (MurNAc) and N-acetylglucosamine (GlcNAc) residues in peptidoglycan with concomitant formation of a 1,6-anhydrobond in the MurNAc residue.. Murein-degrading enzyme. May play a role in recycling of muropeptides during cell elongation and/or cell division. Preferentially cleaves at a distance of more than two disaccharide units from the ends of the glycan chain. The polypeptide is Endo-type membrane-bound lytic murein transglycosylase A (Citrobacter koseri (strain ATCC BAA-895 / CDC 4225-83 / SGSC4696)).